A 278-amino-acid chain; its full sequence is Probable velvet family sexual development regulator SCHCODRAFT_28806 (278 aa).

In terms of domain architecture, Velvet spans Gly51–Arg255. A disordered region spans residues Thr257–Ser278.

It belongs to the velvet family.

Its subcellular location is the nucleus. Its function is as follows. Velvet-domain-containing protein that probably acts as a positive regulator of sexual development. This Schizophyllum commune (strain H4-8 / FGSC 9210) (Split gill fungus) protein is Probable velvet family sexual development regulator SCHCODRAFT_28806.